A 341-amino-acid chain; its full sequence is Cyanuric acid amidohydrolase (341 aa).

Residues 1-90 (MAPIEILKFP…HVTFFLRSPG (90 aa)) form an RU A region. Substrate is bound by residues Arg-51 and 71–72 (SG). The interval 95–229 (GLSAAVGHTR…CHILVLASTS (135 aa)) is RU B. Lys-144 is an active-site residue. Residues Arg-176 and 212–213 (SS) contribute to the substrate site. Ser-212 functions as the Nucleophile in the catalytic mechanism. The tract at residues 235 to 341 (LHAVSRPMAD…SLCLVYETSI (107 aa)) is RU C. A Mg(2+)-binding site is contributed by Glu-273. Substrate-binding positions include Arg-300 and 319 to 320 (SG). The Mg(2+) site is built by Ala-322, Gln-325, Gly-326, Pro-327, and Gly-330.

It belongs to the cyclic amide hydrolase (CyAH) family. As to quaternary structure, homotetramer.

It catalyses the reaction cyanurate + H2O = 1-carboxybiuret + H(+). The protein operates within xenobiotic degradation; atrazine degradation; biuret from cyanurate: step 1/1. With respect to regulation, inhibited by barbituric acid. Functionally, responsible for the hydrolysis of cyanuric acid, an intermediate formed during catabolism of s-triazine based compounds in herbicides such as atrazine and polymers such as melamine. Catalyzes the hydrolytic opening of the s-triazine ring of cyanuric acid (2,4,6-trihydroxy-s-triazine) to yield carbon dioxide and carboxybiuret, which spontaneously decarboxylates to biuret. Only active on cyanuric acid and N-methylisocyanuric acid. This is Cyanuric acid amidohydrolase from Sarocladium sp.